Reading from the N-terminus, the 744-residue chain is Serine/threonine-protein kinase GM11705 (744 aa).

Residues Val-17–Ser-35 are compositionally biased toward polar residues. Disordered stretches follow at residues Val-17–Asn-38 and Asn-54–Glu-78. Doublecortin domains are found at residues Leu-154–Asn-240 and Arg-309–Phe-392. Positions Tyr-473 to Thr-731 constitute a Protein kinase domain. ATP is bound by residues Ile-479–Val-487 and Lys-502. Catalysis depends on Asp-594, which acts as the Proton acceptor.

Belongs to the protein kinase superfamily. CAMK Ser/Thr protein kinase family. CaMK subfamily.

The enzyme catalyses L-seryl-[protein] + ATP = O-phospho-L-seryl-[protein] + ADP + H(+). It carries out the reaction L-threonyl-[protein] + ATP = O-phospho-L-threonyl-[protein] + ADP + H(+). The polypeptide is Serine/threonine-protein kinase GM11705 (Drosophila sechellia (Fruit fly)).